The chain runs to 102 residues: Small ribosomal subunit protein uS10 (102 aa).

This sequence belongs to the universal ribosomal protein uS10 family. Part of the 30S ribosomal subunit.

Functionally, involved in the binding of tRNA to the ribosomes. The protein is Small ribosomal subunit protein uS10 of Cereibacter sphaeroides (strain ATCC 17029 / ATH 2.4.9) (Rhodobacter sphaeroides).